Consider the following 409-residue polypeptide: ATPase ASNA1 homolog (409 aa).

Residue 21 to 28 (KGGVGKTT) participates in ATP binding. Asp62 is an active-site residue. ATP contacts are provided by Glu303 and Asn330. 2 residues coordinate Zn(2+): Cys342 and Cys345.

It belongs to the arsA ATPase family. In terms of assembly, homodimer.

The protein resides in the cytoplasm. It is found in the endoplasmic reticulum. Its function is as follows. ATPase required for the post-translational delivery of tail-anchored (TA) proteins to the endoplasmic reticulum. Recognizes and selectively binds the transmembrane domain of TA proteins in the cytosol. This complex then targets to the endoplasmic reticulum by membrane-bound receptors, where the tail-anchored protein is released for insertion. This process is regulated by ATP binding and hydrolysis. ATP binding drives the homodimer towards the closed dimer state, facilitating recognition of newly synthesized TA membrane proteins. ATP hydrolysis is required for insertion. Subsequently, the homodimer reverts towards the open dimer state, lowering its affinity for the membrane-bound receptor, and returning it to the cytosol to initiate a new round of targeting. This is ATPase ASNA1 homolog from Leishmania major.